Here is a 133-residue protein sequence, read N- to C-terminus: FPRL1 inhibitory protein (133 aa).

Residues 1-28 form the signal peptide; sequence MKKNITKTIIASTVIAAGLLTQTNDAKA.

Belongs to the CHIPS/FLIPr family.

It localises to the secreted. In terms of biological role, may be involved in countering the first line of host defense mechanisms. Impairs the leukocyte response to FPRL1 agonists by binding directly to host FPRL1. The chain is FPRL1 inhibitory protein (flr) from Staphylococcus aureus (strain Mu50 / ATCC 700699).